A 97-amino-acid polypeptide reads, in one-letter code: Antitoxin YafN (97 aa).

Belongs to the phD/YefM antitoxin family. As to quaternary structure, probably forms a complex with the mRNA interferase YafO which inhibits the mRNA interferase activity.

Its function is as follows. Antitoxin component of a type II toxin-antitoxin (TA) system. Functions as an mRNA interferase antitoxin; overexpression prevents YafO-mediated cessation of cell growth and inhibition of cell proliferation. The protein is Antitoxin YafN (yafN) of Escherichia coli (strain K12).